Here is a 150-residue protein sequence, read N- to C-terminus: Viral late gene transcription factor 2 (150 aa).

It belongs to the orthopoxvirus VLTF-2/OPG126 family. As to quaternary structure, interacts with itself. Interacts with the late transcription factors VLTF-1/OPG093.

Its function is as follows. Acts with RNA polymerase to initiate transcription from late gene promoters. In Vaccinia virus (strain Copenhagen) (VACV), this protein is Viral late gene transcription factor 2 (OPG126).